Reading from the N-terminus, the 107-residue chain is SH3 domain-binding glutamic acid-rich-like protein 2 (107 aa).

The SH3-binding signature appears at 61-67 (QGNPLPP).

This sequence belongs to the SH3BGR family. Highly expressed in brain, placenta, liver and kidney. Expressed in retina.

The protein resides in the nucleus. The chain is SH3 domain-binding glutamic acid-rich-like protein 2 (SH3BGRL2) from Homo sapiens (Human).